Consider the following 546-residue polypeptide: Flavin-dependent oxygenase ucdF (546 aa).

In terms of domain architecture, FAD-binding PCMH-type spans 81–263 (QGRIPYYAVM…VNTTIRTFPD (183 aa)).

Belongs to the oxygen-dependent FAD-linked oxidoreductase family.

Functionally, nonribosomal peptide synthetase that mediates the biosynthesis of usterphenyllins and uscandidusins, p-terphenyl derivatives. The function of ucdF within the pathway still remains to be determined. UcdE further prenylates position C-14 of ring C of usterphenyllin B to form usterphenyllin A. The pathway begin with the biosynthesis of 4-hydroxyphenylpyruvate (HPPA) from L-tyrosine, possibly by the aminotransferase ucdG. The nonribosomal peptide synthetase ucdA then condenses two HPPA units to produce atromentin. The key step in this pathway is the reduction and dehydration of atromentin to form a terphenyl triol intermediate, performed by the NAD-dependent dehydrogenase ucdB. Further O-methylation by the methyltransferase ucdC forms terphenyllin carrying two methoxy moieties at C-9 and C-12, and subsequent dihydroxylation at C-3 of ring A and C-15 of ring C by the flavin-dependent oxygenase ucdD leads to 3,15-dihydroxyterphenyllin. Prenylation by ucdE at position C-5 of ring A forms usterphenyllin B, and is followed by a second prenylation at position C-14 of ring C to form usterphenyllin A. The following furan ring formation that leads to uscandidusins A and B was proven to be an unexpected spontaneous non-enzymatic reaction. This Aspergillus ustus protein is Flavin-dependent oxygenase ucdF.